Consider the following 119-residue polypeptide: Immunoglobulin heavy variable 2-70 (119 aa).

The N-terminal stretch at 1 to 19 is a signal peptide; that stretch reads MDILCSTLLLLTVPSWVLS. Q20 carries the pyrrolidone carboxylic acid modification. The segment at 20–44 is framework-1; it reads QVTLRESGPALVKPTQTLTLTCTFS. The Ig-like domain occupies 20–119; that stretch reads QVTLRESGPA…DTATYYCARI (100 aa). The cysteines at positions 41 and 116 are disulfide-linked. A complementarity-determining-1 region spans residues 45-54; that stretch reads GFSLSTSGMC. A framework-2 region spans residues 55-71; sequence VSWIRQPPGKALEWLAL. Residues 72-78 are complementarity-determining-2; the sequence is IDWDDDK. The framework-3 stretch occupies residues 79-116; the sequence is YYSTSLKTRLTISKDTSKNQVVLTMTNMDPVDTATYYC. Residues 117–119 are complementarity-determining-3; it reads ARI.

In terms of assembly, immunoglobulins are composed of two identical heavy chains and two identical light chains; disulfide-linked.

The protein localises to the secreted. The protein resides in the cell membrane. In terms of biological role, v region of the variable domain of immunoglobulin heavy chains that participates in the antigen recognition. Immunoglobulins, also known as antibodies, are membrane-bound or secreted glycoproteins produced by B lymphocytes. In the recognition phase of humoral immunity, the membrane-bound immunoglobulins serve as receptors which, upon binding of a specific antigen, trigger the clonal expansion and differentiation of B lymphocytes into immunoglobulins-secreting plasma cells. Secreted immunoglobulins mediate the effector phase of humoral immunity, which results in the elimination of bound antigens. The antigen binding site is formed by the variable domain of one heavy chain, together with that of its associated light chain. Thus, each immunoglobulin has two antigen binding sites with remarkable affinity for a particular antigen. The variable domains are assembled by a process called V-(D)-J rearrangement and can then be subjected to somatic hypermutations which, after exposure to antigen and selection, allow affinity maturation for a particular antigen. The protein is Immunoglobulin heavy variable 2-70 of Homo sapiens (Human).